Reading from the N-terminus, the 1041-residue chain is Protein SMAX1-like (1041 aa).

The 181-residue stretch at 8–188 (IQQTLTPEAA…KSIIEQSLSA (181 aa)) folds into the Clp R domain. 2 repeat regions span residues 12–98 (LTPE…LDRL) and 117–188 (VSNA…SLSA). Residues 189 to 205 (PSPCPSAAASTTTAGPG) are compositionally biased toward low complexity. Disordered regions lie at residues 189–214 (PSPC…PSPL), 482–513 (EAEQ…QNKA), and 889–913 (EGSH…VKRS). Positions 482–495 (EAEQTDKPASRPEA) are enriched in basic and acidic residues. Positions 891-900 (SHNSSDVSVE) are enriched in polar residues.

This sequence belongs to the ClpA/ClpB family.

In terms of biological role, may act downstream of MAX2 to negatively regulate karrikins/strigolactone responses. Acts probably specifically in the karrikin pathway. May function in a transcriptional corepressor complex. The polypeptide is Protein SMAX1-like (Oryza sativa subsp. japonica (Rice)).